Reading from the N-terminus, the 398-residue chain is Proteasome-activating nucleotidase (398 aa).

Residues 3–60 (DSEIQYLLEKLKKLEEDYYKLRELYRRLEDEKKFIESERIRYEREVRRLRSEVERLRS) are a coiled coil. ATP is bound by residues 185–190 (GTGKTL) and H324. The docks into pockets in the proteasome alpha-ring to cause gate opening stretch occupies residues 396–398 (MFV).

This sequence belongs to the AAA ATPase family. Homohexamer. The hexameric complex has a two-ring architecture resembling a top hat that caps the 20S proteasome core at one or both ends. Upon ATP-binding, the C-terminus of PAN interacts with the alpha-rings of the proteasome core by binding to the intersubunit pockets.

The protein localises to the cytoplasm. In terms of biological role, ATPase which is responsible for recognizing, binding, unfolding and translocation of substrate proteins into the archaeal 20S proteasome core particle. Is essential for opening the gate of the 20S proteasome via an interaction with its C-terminus, thereby allowing substrate entry and access to the site of proteolysis. Thus, the C-termini of the proteasomal ATPase function like a 'key in a lock' to induce gate opening and therefore regulate proteolysis. Unfolding activity requires energy from ATP hydrolysis, whereas ATP binding alone promotes ATPase-20S proteasome association which triggers gate opening, and supports translocation of unfolded substrates. The chain is Proteasome-activating nucleotidase from Archaeoglobus fulgidus (strain ATCC 49558 / DSM 4304 / JCM 9628 / NBRC 100126 / VC-16).